The following is a 370-amino-acid chain: Molybdenum import ATP-binding protein ModC (370 aa).

Residues Met-1–Arg-232 form the ABC transporter domain. Residue Gly-30–Thr-37 participates in ATP binding. The Mop domain occupies Met-292 to Glu-363.

Belongs to the ABC transporter superfamily. Molybdate importer (TC 3.A.1.8) family. In terms of assembly, the complex is composed of two ATP-binding proteins (ModC), two transmembrane proteins (ModB) and a solute-binding protein (ModA).

Its subcellular location is the cell inner membrane. It catalyses the reaction molybdate(out) + ATP + H2O = molybdate(in) + ADP + phosphate + H(+). Part of the ABC transporter complex ModABC involved in molybdenum import. Responsible for energy coupling to the transport system. The sequence is that of Molybdenum import ATP-binding protein ModC from Rhodospirillum rubrum (strain ATCC 11170 / ATH 1.1.1 / DSM 467 / LMG 4362 / NCIMB 8255 / S1).